We begin with the raw amino-acid sequence, 77 residues long: MPKKIHPTWYPEAKVICNGELVMTVGSTKPEIHVEVWSGNHPFYTGTQKMIDTEGRVDRFLRKYKMGDKSSKKADQK.

It belongs to the bacterial ribosomal protein bL31 family. Type A subfamily. Part of the 50S ribosomal subunit.

Functionally, binds the 23S rRNA. The protein is Large ribosomal subunit protein bL31 of Microcystis aeruginosa (strain NIES-843 / IAM M-2473).